Here is a 422-residue protein sequence, read N- to C-terminus: Serine--tRNA ligase (422 aa).

229–231 (TAE) provides a ligand contact to L-serine. Position 260-262 (260-262 (RKE)) interacts with ATP. Glu-283 is an L-serine binding site. 347–350 (EISS) contacts ATP. Ser-383 contacts L-serine.

Belongs to the class-II aminoacyl-tRNA synthetase family. Type-1 seryl-tRNA synthetase subfamily. As to quaternary structure, homodimer. The tRNA molecule binds across the dimer.

Its subcellular location is the cytoplasm. The enzyme catalyses tRNA(Ser) + L-serine + ATP = L-seryl-tRNA(Ser) + AMP + diphosphate + H(+). The catalysed reaction is tRNA(Sec) + L-serine + ATP = L-seryl-tRNA(Sec) + AMP + diphosphate + H(+). Its pathway is aminoacyl-tRNA biosynthesis; selenocysteinyl-tRNA(Sec) biosynthesis; L-seryl-tRNA(Sec) from L-serine and tRNA(Sec): step 1/1. Functionally, catalyzes the attachment of serine to tRNA(Ser). Is also able to aminoacylate tRNA(Sec) with serine, to form the misacylated tRNA L-seryl-tRNA(Sec), which will be further converted into selenocysteinyl-tRNA(Sec). The sequence is that of Serine--tRNA ligase from Geotalea uraniireducens (strain Rf4) (Geobacter uraniireducens).